The chain runs to 239 residues: MNNTPPIIALDFASAQETYAFLDRFQGEELFVKVGMELFYQEGPAILENLQERGCRIFLDLKCHDIPTTVYKAMKRLAGFGVSLVNVHAAGGKQMMESALEGLEAGTPAGQKRPSLIAVTQLTSTSSEMLQRELLIETPLLDTVVHYSRLAEESGLDGVVCSVHEAEHIYRAVSVDFLTVTPGIRMADDKNNDQVRVATPGYAREKGVSAIVVGRSITQAEDPVSAYRRIGHEWEGTKA.

Substrate is bound by residues D11, K33, 60–69, T123, R185, Q194, G214, and R215; that span reads DLKCHDIPTT. K62 acts as the Proton donor in catalysis.

This sequence belongs to the OMP decarboxylase family. Type 1 subfamily. As to quaternary structure, homodimer.

It catalyses the reaction orotidine 5'-phosphate + H(+) = UMP + CO2. Its pathway is pyrimidine metabolism; UMP biosynthesis via de novo pathway; UMP from orotate: step 2/2. Catalyzes the decarboxylation of orotidine 5'-monophosphate (OMP) to uridine 5'-monophosphate (UMP). In Bacillus licheniformis (strain ATCC 14580 / DSM 13 / JCM 2505 / CCUG 7422 / NBRC 12200 / NCIMB 9375 / NCTC 10341 / NRRL NRS-1264 / Gibson 46), this protein is Orotidine 5'-phosphate decarboxylase.